The chain runs to 102 residues: Large ribosomal subunit protein bL21 (102 aa).

Basic residues predominate over residues 79–91; it reads RKDSKRKKGHRQP. The disordered stretch occupies residues 79-102; sequence RKDSKRKKGHRQPYTKLTIDKINA.

This sequence belongs to the bacterial ribosomal protein bL21 family. As to quaternary structure, part of the 50S ribosomal subunit. Contacts protein L20.

Its function is as follows. This protein binds to 23S rRNA in the presence of protein L20. The polypeptide is Large ribosomal subunit protein bL21 (Staphylococcus epidermidis (strain ATCC 35984 / DSM 28319 / BCRC 17069 / CCUG 31568 / BM 3577 / RP62A)).